Consider the following 598-residue polypeptide: Elongation factor 4 (598 aa).

The region spanning 3-185 (QHIRNFSIIA…MIVAQIPPPE (183 aa)) is the tr-type G domain. GTP contacts are provided by residues 15-20 (DHGKST) and 132-135 (NKID).

This sequence belongs to the TRAFAC class translation factor GTPase superfamily. Classic translation factor GTPase family. LepA subfamily.

Its subcellular location is the cell inner membrane. It catalyses the reaction GTP + H2O = GDP + phosphate + H(+). Functionally, required for accurate and efficient protein synthesis under certain stress conditions. May act as a fidelity factor of the translation reaction, by catalyzing a one-codon backward translocation of tRNAs on improperly translocated ribosomes. Back-translocation proceeds from a post-translocation (POST) complex to a pre-translocation (PRE) complex, thus giving elongation factor G a second chance to translocate the tRNAs correctly. Binds to ribosomes in a GTP-dependent manner. This Nitrosomonas europaea (strain ATCC 19718 / CIP 103999 / KCTC 2705 / NBRC 14298) protein is Elongation factor 4.